The sequence spans 289 residues: CRISPR-associated endoribonuclease Cas6 2 (289 aa).

It belongs to the CRISPR-associated endoribonuclease Cas6 family. As to quaternary structure, possibly part of the aCascade ribonucleoprotein complex. Mg(2+) serves as cofactor.

Functionally, CRISPR (clustered regularly interspaced short palindromic repeat) is an adaptive immune system that provides protection against mobile genetic elements (viruses, transposable elements and conjugative plasmids). CRISPR clusters contain sequences complementary to antecedent mobile elements and target invading nucleic acids. CRISPR clusters are transcribed and processed into CRISPR RNA (crRNA). Functions as a ssRNA-specific endoribonuclease, generating an 8 base-long tag known as the 5' handle. The polypeptide is CRISPR-associated endoribonuclease Cas6 2 (cas6b) (Saccharolobus solfataricus (strain ATCC 35092 / DSM 1617 / JCM 11322 / P2) (Sulfolobus solfataricus)).